The chain runs to 371 residues: Cytochrome b (371 aa).

4 helical membrane passes run 25–45, 69–90, 105–125, and 170–190; these read FGSM…FLAV, WMMQ…YTHI, WLSG…GYVL, and FFAL…LHIM. The heme b site is built by H75 and H89. Heme b is bound by residues H174 and H188. H193 contacts a ubiquinone. A run of 4 helical transmembrane segments spans residues 218–238, 280–300, 312–332, and 339–358; these read YKDM…VAFF, LGGA…PFTH, IMQL…WAAT, and FTTI…ITNP.

This sequence belongs to the cytochrome b family. The cytochrome bc1 complex contains 3 respiratory subunits (MT-CYB, CYC1 and UQCRFS1), 2 core proteins (UQCRC1 and UQCRC2) and probably 6 low-molecular weight proteins. Requires heme b as cofactor.

The protein resides in the mitochondrion inner membrane. Component of the ubiquinol-cytochrome c reductase complex (complex III or cytochrome b-c1 complex) that is part of the mitochondrial respiratory chain. The b-c1 complex mediates electron transfer from ubiquinol to cytochrome c. Contributes to the generation of a proton gradient across the mitochondrial membrane that is then used for ATP synthesis. The protein is Cytochrome b (MT-CYB) of Eryx colubrinus colubrinus.